Here is a 292-residue protein sequence, read N- to C-terminus: Homeobox-leucine zipper protein HOX19 (292 aa).

3 disordered regions span residues 14-85, 99-133, and 217-236; these read LALG…HSVS, RERAEEADGERVSSTAAGRDDDDDGSTRKKLRLTK, and FAPPPPSSAAHQPSPAPPAP. The span at 28 to 74 shows a compositional bias: low complexity; sequence TDAAAAHRGGCRRPSPSSQCPPLEPSLTLSLPDDAAAGAAATATATA. Basic and acidic residues predominate over residues 99 to 109; it reads RERAEEADGER. The homeobox DNA-binding region spans 124-183; the sequence is STRKKLRLTKEQSALLEDRFREHSTLNPKQKVALAKQLNLRPRQVEVWFQNRRARTKLKQ. A leucine-zipper region spans residues 182–226; the sequence is KQTEVDCEFLKRCCETLTEENRRLQRELQELRALKFAPPPPSSAA.

Belongs to the HD-ZIP homeobox family. Class II subfamily. In terms of tissue distribution, expressed in seedlings, roots, stems, leaf sheaths and blades and panicles.

The protein resides in the nucleus. Probable transcription factor. This Oryza sativa subsp. japonica (Rice) protein is Homeobox-leucine zipper protein HOX19 (HOX19).